Reading from the N-terminus, the 150-residue chain is 3-hydroxyacyl-[acyl-carrier-protein] dehydratase FabZ (150 aa).

The active site involves H51.

This sequence belongs to the thioester dehydratase family. FabZ subfamily.

The protein localises to the cytoplasm. The catalysed reaction is a (3R)-hydroxyacyl-[ACP] = a (2E)-enoyl-[ACP] + H2O. In terms of biological role, involved in unsaturated fatty acids biosynthesis. Catalyzes the dehydration of short chain beta-hydroxyacyl-ACPs and long chain saturated and unsaturated beta-hydroxyacyl-ACPs. This is 3-hydroxyacyl-[acyl-carrier-protein] dehydratase FabZ from Geobacter sulfurreducens (strain ATCC 51573 / DSM 12127 / PCA).